Here is a 426-residue protein sequence, read N- to C-terminus: 3-isopropylmalate dehydratase large subunit (426 aa).

[4Fe-4S] cluster-binding residues include Cys-307, Cys-367, and Cys-370.

It belongs to the aconitase/IPM isomerase family. LeuC type 2 subfamily. As to quaternary structure, heterodimer of LeuC and LeuD. The cofactor is [4Fe-4S] cluster.

The enzyme catalyses (2R,3S)-3-isopropylmalate = (2S)-2-isopropylmalate. It participates in amino-acid biosynthesis; L-leucine biosynthesis; L-leucine from 3-methyl-2-oxobutanoate: step 2/4. Functionally, catalyzes the isomerization between 2-isopropylmalate and 3-isopropylmalate, via the formation of 2-isopropylmaleate. This Sulfurovum sp. (strain NBC37-1) protein is 3-isopropylmalate dehydratase large subunit.